The chain runs to 110 residues: Mobility group protein 1B (110 aa).

Residues 5–71 (PKRPLSAYML…NYIRALQEYE (67 aa)) constitute a DNA-binding region (HMG box). The span at 71-81 (ERNGGGGDDKG) shows a compositional bias: basic and acidic residues. A disordered region spans residues 71-110 (ERNGGGGDDKGKKRKGAAPKKGAGKKSKKGAHSDDDGDSE). Basic residues predominate over residues 82–100 (KKRKGAAPKKGAGKKSKKG).

Belongs to the HMGB family.

The protein resides in the nucleus. Its subcellular location is the chromosome. In terms of biological role, found in condensed chromomeres. Binds preferentially to AT-rich DNA. This chain is Mobility group protein 1B (HMG1B), found in Chironomus tentans (Midge).